The sequence spans 794 residues: Zinc finger protein 148 (794 aa).

Lys-6 participates in a covalent cross-link: Glycyl lysine isopeptide (Lys-Gly) (interchain with G-Cter in SUMO2). Phosphoserine is present on Ser-51. Residues Lys-88, Lys-115, and Lys-132 each participate in a glycyl lysine isopeptide (Lys-Gly) (interchain with G-Cter in SUMO2) cross-link. The segment at 171–193 (HVCEHCNAAFRTNYHLQRHVFIH) adopts a C2H2-type 1 zinc-finger fold. Thr-194 bears the Phosphothreonine mark. 2 consecutive C2H2-type zinc fingers follow at residues 199-221 (FQCS…EKIH) and 227-249 (FRCD…KRTH). Ser-250 carries the post-translational modification Phosphoserine. A C2H2-type 4 zinc finger spans residues 255–278 (YQCEYCLQYFSRTDRVLKHKRMCH). Residue Lys-291 forms a Glycyl lysine isopeptide (Lys-Gly) (interchain with G-Cter in SUMO2) linkage. The disordered stretch occupies residues 298-338 (EEDSGFSTSPKDNSLPKKKRQKTEKKSSGMDKESSLDKSDL). 2 positions are modified to phosphoserine: Ser-301 and Ser-306. Lys-308 participates in a covalent cross-link: Glycyl lysine isopeptide (Lys-Gly) (interchain with G-Cter in SUMO2). Positions 321 to 338 (EKKSSGMDKESSLDKSDL) are enriched in basic and acidic residues. Residue Lys-356 forms a Glycyl lysine isopeptide (Lys-Gly) (interchain with G-Cter in SUMO1); alternate linkage. Lys-356 is covalently cross-linked (Glycyl lysine isopeptide (Lys-Gly) (interchain with G-Cter in SUMO2); alternate). Lys-402 participates in a covalent cross-link: Glycyl lysine isopeptide (Lys-Gly) (interchain with G-Cter in SUMO2). Position 412 is a phosphoserine (Ser-412). Residues Lys-421 and Lys-424 each participate in a glycyl lysine isopeptide (Lys-Gly) (interchain with G-Cter in SUMO2) cross-link. The span at 575-588 (SSEVPEVTQSENVG) shows a compositional bias: polar residues. The segment at 575–596 (SSEVPEVTQSENVGSSSQASSS) is disordered. Lys-607 carries the N6-acetyllysine modification. 2 positions are modified to phosphoserine: Ser-665 and Ser-784. A disordered region spans residues 775–794 (NDNRAGMTSSPDATTGQTFG).

The protein belongs to the krueppel C2H2-type zinc-finger protein family. In terms of assembly, interacts with HNRNPDL. Interacts with the 5FMC complex; the interaction requires association with CHTOP. Interacts with CAVIN1. In terms of processing, sumoylated with SUMO2. Desumoylated by SENP3, resulting in the stimulation of transcription of its target genes.

It localises to the nucleus. Involved in transcriptional regulation. Represses the transcription of a number of genes including gastrin, stromelysin and enolase. Binds to the G-rich box in the enhancer region of these genes. This is Zinc finger protein 148 (ZNF148) from Bos taurus (Bovine).